The chain runs to 717 residues: Ferric reduction oxidase 3, mitochondrial (717 aa).

The transit peptide at 1–23 directs the protein to the mitochondrion; sequence MAARGRLVVARGNRSFSSIIRKY. Transmembrane regions (helical) follow at residues 40 to 59, 86 to 104, 140 to 163, 232 to 255, 306 to 330, and 353 to 373; these read LLTM…MPTS, LLVY…SIYL, LGIV…WSLA, YHIW…CIYW, THYL…LISF, and LVSA…KNPM. One can recognise a Ferric oxidoreductase domain in the interval 198–317; sequence GLTGNICLGF…YLYMVFMLFF (120 aa). Positions 233, 247, 307, and 320 each coordinate heme. An FAD-binding FR-type domain is found at 346 to 451; sequence QSRNNVKLVS…EGPYGPASTD (106 aa). 395–398 is an FAD binding site; sequence HPFT. 443–446 serves as a coordination point for NAD(+); that stretch reads GPYG. 2 consecutive transmembrane segments (helical) span residues 564 to 586 and 606 to 627; these read WLWL…AIIS and SLIY…AMLC.

It belongs to the ferric reductase (FRE) family. FAD is required as a cofactor. Expressed in root steele. Detected in shoots, leaves, stems, siliques, flowers and cotyledons.

Its subcellular location is the mitochondrion membrane. The catalysed reaction is 2 a Fe(II)-siderophore + NAD(+) + H(+) = 2 a Fe(III)-siderophore + NADH. In terms of biological role, ferric chelate reductase involved in iron reduction in roots. May participate in the transport of electrons to a Fe(3+) ion via FAD and heme intermediates. In Arabidopsis thaliana (Mouse-ear cress), this protein is Ferric reduction oxidase 3, mitochondrial (FRO3).